A 194-amino-acid polypeptide reads, in one-letter code: Protein GrpE (194 aa).

Over residues 1–12 (MNKQKNNRERTP) the composition is skewed to basic and acidic residues. The disordered stretch occupies residues 1 to 44 (MNKQKNNRERTPQPEQDTERDEQLTNSHENDIDSAPAAEENDKV).

This sequence belongs to the GrpE family. As to quaternary structure, homodimer.

It localises to the cytoplasm. Participates actively in the response to hyperosmotic and heat shock by preventing the aggregation of stress-denatured proteins, in association with DnaK and GrpE. It is the nucleotide exchange factor for DnaK and may function as a thermosensor. Unfolded proteins bind initially to DnaJ; upon interaction with the DnaJ-bound protein, DnaK hydrolyzes its bound ATP, resulting in the formation of a stable complex. GrpE releases ADP from DnaK; ATP binding to DnaK triggers the release of the substrate protein, thus completing the reaction cycle. Several rounds of ATP-dependent interactions between DnaJ, DnaK and GrpE are required for fully efficient folding. The chain is Protein GrpE from Porphyromonas gingivalis (strain ATCC 33277 / DSM 20709 / CIP 103683 / JCM 12257 / NCTC 11834 / 2561).